Reading from the N-terminus, the 324-residue chain is Proto-oncogene Mas (324 aa).

The Extracellular portion of the chain corresponds to 1-35 (MDQSNMTSFAEEKAMNTSSRNASLGTSHPPIPIVH). N5, N16, and N21 each carry an N-linked (GlcNAc...) asparagine glycan. Residues 36-60 (WVIMSISPLGFVENGILLWFLCFRM) traverse the membrane as a helical segment. Residues 61-64 (RRNP) lie on the Cytoplasmic side of the membrane. A helical membrane pass occupies residues 65–86 (FTVYITHLSIADISLLFCIFIL). The Extracellular portion of the chain corresponds to 87 to 103 (SIDYALDYELSSGHYYT). The chain crosses the membrane as a helical span at residues 104 to 127 (IVTLSVTFLFGYNTGLYLLTAISV). Over 128–148 (ERCLSVLYPIWYRCHRPKHQS) the chain is Cytoplasmic. A helical transmembrane segment spans residues 149–171 (AFVCALLWALSCLVTTMEYVMCI). The Extracellular portion of the chain corresponds to 172-184 (DSGEESHSQSDCR). A helical membrane pass occupies residues 185-205 (AVIIFIAILSFLVFTPLMLVS). The Cytoplasmic portion of the chain corresponds to 206–223 (STILVVKIRKNTWASHSS). A helical transmembrane segment spans residues 224-244 (KLYIVIMVTIIIFLIFAMPMR). The Extracellular segment spans residues 245–262 (VLYLLYYEYWSTFGNLHN). Residues 263-283 (ISLLFSTINSSANPFIYFFVG) form a helical membrane-spanning segment. Residues 284-324 (SSKKKRFRESLKVVLTRAFKDEMQPRRQEGNGNTVSIETVV) lie on the Cytoplasmic side of the membrane.

The protein belongs to the G-protein coupled receptor 1 family. In terms of assembly, interacts with AGTR1. Interacts with FLNA (via filamin repeat 21); increases PKA-mediated phosphorylation of FLNA. In terms of tissue distribution, expressed in platelets.

The protein localises to the cell membrane. Receptor for angiotensin 1-7. Acts specifically as a functional antagonist of AGTR1 (angiotensin-2 type 1 receptor), although it up-regulates AGTR1 receptor levels. Positive regulation of AGTR1 levels occurs through activation of the G-proteins GNA11 and GNAQ, and stimulation of the protein kinase C signaling cascade. The antagonist effect on AGTR1 function is probably due to AGTR1 being physically altered by MAS1. The chain is Proto-oncogene Mas (Mas1) from Rattus norvegicus (Rat).